Consider the following 361-residue polypeptide: tRNA-specific 2-thiouridylase MnmA (361 aa).

Residues 10–17 (GMSGGVDS) and Met-36 contribute to the ATP site. Catalysis depends on Cys-104, which acts as the Nucleophile. An intrachain disulfide couples Cys-104 to Cys-202. Position 128 (Gly-128) interacts with ATP. Positions 152-154 (KDQ) are interaction with tRNA. The active-site Cysteine persulfide intermediate is the Cys-202. An interaction with tRNA region spans residues 308-309 (RY).

This sequence belongs to the MnmA/TRMU family.

The protein resides in the cytoplasm. The enzyme catalyses S-sulfanyl-L-cysteinyl-[protein] + uridine(34) in tRNA + AH2 + ATP = 2-thiouridine(34) in tRNA + L-cysteinyl-[protein] + A + AMP + diphosphate + H(+). Catalyzes the 2-thiolation of uridine at the wobble position (U34) of tRNA, leading to the formation of s(2)U34. The sequence is that of tRNA-specific 2-thiouridylase MnmA from Clostridioides difficile (strain 630) (Peptoclostridium difficile).